The chain runs to 1135 residues: Topless-related protein 4 (1135 aa).

In terms of domain architecture, LisH spans 4–36 (LSRELVFLILQFLDEEKFKDTVHRLEKESGFFF). The CTLH domain occupies 34-92 (FFFNMRYFEDSVTAGEWDDVEKYLSGFTKVDDNRYSMKIFFEIRKQKYLEALDKKDHAK). A Phosphoserine modification is found at serine 214. The tract at residues 281–303 (LKRERPRSPPTNSLSMDYQTADS) is disordered. Polar residues predominate over residues 290–303 (PTNSLSMDYQTADS). 12 WD repeats span residues 355–395 (SQGS…KLVS), 417–456 (EYTA…DLRN), 462–503 (AHAG…KLHT), 506–547 (GHEA…SRVD), 550–593 (APGR…VKRT), 597–636 (LGKR…LLSS), 638–680 (AAEG…RILH), 776–815 (LLPA…RNLL), 843–881 (NKED…TMTT), 884–924 (APPP…VKSK), 927–966 (GHQK…KQAS), and 1020–1059 (ESSG…LKCR). The disordered stretch occupies residues 1095 to 1135 (DGGVHVIEPPGPEGKWGISAPPENGAGPSVSSAPGSDQQPR). The segment covering 1119–1135 (GAGPSVSSAPGSDQQPR) has biased composition (low complexity).

As to quaternary structure, tetramer. Interacts with WUS (via the C-terminal domain). Interacts with SPL (via EAR motif). Interacts with SPEAR3/TIE1. Binds to and corepresses GAF1/IDD2 at the promoter of GA20OX2 gene.

It localises to the nucleus. Transcription corepressor of Zinc finger transcription factors GAF1/IDD2 and ENY/IDD1 in regulation of gibberellin homeostasis and signaling. This chain is Topless-related protein 4 (TPR4), found in Arabidopsis thaliana (Mouse-ear cress).